The following is a 494-amino-acid chain: Endoglucanase 1 (494 aa).

Positions methionine 1–alanine 25 are cleaved as a signal peptide. The Nucleophile role is filled by aspartate 82. Asparagine 254 and asparagine 359 each carry an N-linked (GlcNAc...) asparagine glycan. Active-site residues include histidine 411, aspartate 462, and glutamate 471.

This sequence belongs to the glycosyl hydrolase 9 (cellulase E) family.

It catalyses the reaction Endohydrolysis of (1-&gt;4)-beta-D-glucosidic linkages in cellulose, lichenin and cereal beta-D-glucans.. Functionally, involved in ripening fruit process. The polypeptide is Endoglucanase 1 (CEL1) (Persea americana (Avocado)).